Consider the following 128-residue polypeptide: Large ribosomal subunit protein bL20c (128 aa).

Belongs to the bacterial ribosomal protein bL20 family.

The protein resides in the plastid. In terms of biological role, binds directly to 23S ribosomal RNA and is necessary for the in vitro assembly process of the 50S ribosomal subunit. It is not involved in the protein synthesizing functions of that subunit. This is Large ribosomal subunit protein bL20c (rpl20) from Lathraea clandestina (Purple toothwort).